A 238-amino-acid polypeptide reads, in one-letter code: SPbeta prophage-derived uncharacterized protein YorM (238 aa).

The signal sequence occupies residues 1-37 (MFKKLIDKHKKYVYHRINKMALFATIGLLGVGLVYSA). Positions 111–121 (TKTKKVQKTNT) are enriched in basic residues. Residues 111–132 (TKTKKVQKTNTKRNLDKAVSKS) form a disordered region.

The chain is SPbeta prophage-derived uncharacterized protein YorM (yorM) from Bacillus subtilis (strain 168).